Here is a 557-residue protein sequence, read N- to C-terminus: MSDIQIAQANEATEMKSITAIAEQIGLQATDIEQYGPYKAKLNFQAINRLKEKEDGKLVLVTSINPTPAGEGKSTVTVGLGDALRQLDQSAVIALREPSLGPVMGMKGGATGGGYAQVVPMADINLHFTGDMHALTATVNTLAALIDNHLQQGNVLNIDPRRIIWKRALDINDRALRQVVIGLGGPVQGMPRQDGFDITVASELMAILCLATDITDLKNRISKIVIGYNYDREPVTVGDLEVTGAIAMLLKDALKPNMVQTLEHTPALVHGGPFANIAHGCNSILATQTALKLGDIAITEAGFGADLGAEKFLDIKVPQLGKTPDTIVIVATIRALKYNGGVALADLTTENLDALKAGFSNLAKHIANMQRYGVPVVVSVNEFTSDTAAEVQLLQDLCQAMKVTAVPTSVWANGGQGGIELAKAVLAALQQPKAFKPLYDPQADIKSKLTTVVTEIYGGRDVVFEGKAINQLKQIEKNGWAHLPVCIAKTQYSLSDDPKALGAPSDFTIHVRELIPKLGAGFIVAMTGAVLTMPGLPKKPAALNMDVTADGQISGLF.

67 to 74 (TPAGEGKS) is a binding site for ATP.

The protein belongs to the formate--tetrahydrofolate ligase family.

It catalyses the reaction (6S)-5,6,7,8-tetrahydrofolate + formate + ATP = (6R)-10-formyltetrahydrofolate + ADP + phosphate. The protein operates within one-carbon metabolism; tetrahydrofolate interconversion. This is Formate--tetrahydrofolate ligase from Latilactobacillus sakei subsp. sakei (strain 23K) (Lactobacillus sakei subsp. sakei).